Here is a 654-residue protein sequence, read N- to C-terminus: Arrestin domain-containing protein C (654 aa).

One can recognise a C2 domain in the interval 1-105; that stretch reads MTQRSLKINI…AKRNLMDQWL (105 aa). Residues 616–647 adopt a coiled-coil conformation; sequence AKRIFLKIQQIQSERQKQQEQQEQQVVSNLEA.

This sequence belongs to the arrestin family.

The chain is Arrestin domain-containing protein C (adcC) from Dictyostelium discoideum (Social amoeba).